A 354-amino-acid chain; its full sequence is UDP-N-acetylglucosamine--N-acetylmuramyl-(pentapeptide) pyrophosphoryl-undecaprenol N-acetylglucosamine transferase (354 aa).

Residues 12–14 (TGG), Asn124, Arg163, Ser187, Ile240, and Gln285 each bind UDP-N-acetyl-alpha-D-glucosamine.

It belongs to the glycosyltransferase 28 family. MurG subfamily.

It localises to the cell inner membrane. It catalyses the reaction di-trans,octa-cis-undecaprenyl diphospho-N-acetyl-alpha-D-muramoyl-L-alanyl-D-glutamyl-meso-2,6-diaminopimeloyl-D-alanyl-D-alanine + UDP-N-acetyl-alpha-D-glucosamine = di-trans,octa-cis-undecaprenyl diphospho-[N-acetyl-alpha-D-glucosaminyl-(1-&gt;4)]-N-acetyl-alpha-D-muramoyl-L-alanyl-D-glutamyl-meso-2,6-diaminopimeloyl-D-alanyl-D-alanine + UDP + H(+). The protein operates within cell wall biogenesis; peptidoglycan biosynthesis. Its function is as follows. Cell wall formation. Catalyzes the transfer of a GlcNAc subunit on undecaprenyl-pyrophosphoryl-MurNAc-pentapeptide (lipid intermediate I) to form undecaprenyl-pyrophosphoryl-MurNAc-(pentapeptide)GlcNAc (lipid intermediate II). The sequence is that of UDP-N-acetylglucosamine--N-acetylmuramyl-(pentapeptide) pyrophosphoryl-undecaprenol N-acetylglucosamine transferase from Methylococcus capsulatus (strain ATCC 33009 / NCIMB 11132 / Bath).